The primary structure comprises 181 residues: Translation initiation factor IF-3, chloroplastic (181 aa).

The protein belongs to the IF-3 family. In terms of assembly, monomer.

It localises to the plastid. It is found in the chloroplast. In terms of biological role, IF-3 binds to the 30S ribosomal subunit and shifts the equilibrium between 70S ribosomes and their 50S and 30S subunits in favor of the free subunits, thus enhancing the availability of 30S subunits on which protein synthesis initiation begins. In Gracilaria tenuistipitata var. liui (Red alga), this protein is Translation initiation factor IF-3, chloroplastic.